Consider the following 208-residue polypeptide: Thymidylate kinase (208 aa).

Residue 11-18 (GTEGVGKT) participates in ATP binding.

The protein belongs to the thymidylate kinase family.

The catalysed reaction is dTMP + ATP = dTDP + ADP. Functionally, phosphorylation of dTMP to form dTDP in both de novo and salvage pathways of dTTP synthesis. The sequence is that of Thymidylate kinase from Psychrobacter sp. (strain PRwf-1).